Reading from the N-terminus, the 205-residue chain is Large ribosomal subunit protein uL3 (205 aa).

This sequence belongs to the universal ribosomal protein uL3 family. In terms of assembly, part of the 50S ribosomal subunit. Forms a cluster with proteins L14 and L19.

Its function is as follows. One of the primary rRNA binding proteins, it binds directly near the 3'-end of the 23S rRNA, where it nucleates assembly of the 50S subunit. This Flavobacterium johnsoniae (strain ATCC 17061 / DSM 2064 / JCM 8514 / BCRC 14874 / CCUG 350202 / NBRC 14942 / NCIMB 11054 / UW101) (Cytophaga johnsonae) protein is Large ribosomal subunit protein uL3.